A 499-amino-acid polypeptide reads, in one-letter code: Probable UTP--glucose-1-phosphate uridylyltransferase (499 aa).

UTP is bound by residues 108–111, Lys122, Gln185, and Gly214; that span reads LNGG. Residue 110–111 coordinates substrate; that stretch reads GG. Residues His215 and 243–245 contribute to the substrate site; that span reads NID. Asp245 and Lys387 together coordinate UTP.

The protein belongs to the UDPGP type 1 family.

It localises to the cytoplasm. The protein localises to the nucleus. The catalysed reaction is alpha-D-glucose 1-phosphate + UTP + H(+) = UDP-alpha-D-glucose + diphosphate. Plays a central role as a glucosyl donor in cellular metabolic pathways. This chain is Probable UTP--glucose-1-phosphate uridylyltransferase, found in Schizosaccharomyces pombe (strain 972 / ATCC 24843) (Fission yeast).